The chain runs to 75 residues: Antitoxin MT0312 (75 aa).

Its function is as follows. Antitoxin component of a type II toxin-antitoxin (TA) system. This chain is Antitoxin MT0312, found in Mycobacterium tuberculosis (strain CDC 1551 / Oshkosh).